We begin with the raw amino-acid sequence, 98 residues long: Large ribosomal subunit protein mL53 (98 aa).

The protein belongs to the mitochondrion-specific ribosomal protein mL53 family. In terms of assembly, component of the mitochondrial large ribosomal subunit (mt-LSU). Mature N.crassa 74S mitochondrial ribosomes consist of a small (37S) and a large (54S) subunit. The 37S small subunit contains a 16S ribosomal RNA (16S mt-rRNA) and 32 different proteins. The 54S large subunit contains a 23S rRNA (23S mt-rRNA) and 42 different proteins.

It localises to the mitochondrion. In terms of biological role, component of the mitochondrial ribosome (mitoribosome), a dedicated translation machinery responsible for the synthesis of mitochondrial genome-encoded proteins, including at least some of the essential transmembrane subunits of the mitochondrial respiratory chain. The mitoribosomes are attached to the mitochondrial inner membrane and translation products are cotranslationally integrated into the membrane. The chain is Large ribosomal subunit protein mL53 (mrpl44) from Neurospora crassa (strain ATCC 24698 / 74-OR23-1A / CBS 708.71 / DSM 1257 / FGSC 987).